A 480-amino-acid chain; its full sequence is MFS-type transporter oryF (480 aa).

The segment covering 1 to 10 has biased composition (basic and acidic residues); it reads MAEEVNERTR. The disordered stretch occupies residues 1–24; the sequence is MAEEVNERTRLLSQSDDPSPSLEE. Positions 11–22 are enriched in low complexity; it reads LLSQSDDPSPSL. Transmembrane regions (helical) follow at residues 41 to 61, 81 to 101, 107 to 127, 138 to 158, 170 to 190, 197 to 217, 264 to 284, 308 to 328, 351 to 371, 378 to 398, 415 to 435, and 443 to 463; these read LCIA…AIIV, AFVS…GPLS, ISLL…CAFA, FITG…IGDL, LYTL…AYIV, AIFA…LCTL, FLGT…LFGL, ALNY…TGSL, ILML…GWSA, IMPN…YQCI, GALT…APLI, and WGSS…PILL.

Belongs to the major facilitator superfamily.

It localises to the membrane. MFS-type transporter; part of the gene cluster that mediates the biosynthesis of oryzines, natural products with an unusual maleidride backbone. In Aspergillus oryzae (strain ATCC 42149 / RIB 40) (Yellow koji mold), this protein is MFS-type transporter oryF.